The chain runs to 59 residues: Large ribosomal subunit protein uL30 (59 aa).

Belongs to the universal ribosomal protein uL30 family. Part of the 50S ribosomal subunit.

This Nocardia farcinica (strain IFM 10152) protein is Large ribosomal subunit protein uL30.